A 283-amino-acid chain; its full sequence is Diaminopimelate epimerase (283 aa).

Positions 13 and 67 each coordinate substrate. Cysteine 76 functions as the Proton donor in the catalytic mechanism. Substrate is bound by residues glycine 77–asparagine 78, asparagine 166, asparagine 199, and glutamate 217–arginine 218. The Proton acceptor role is filled by cysteine 226. Substrate is bound at residue glycine 227–threonine 228.

Belongs to the diaminopimelate epimerase family. Homodimer.

Its subcellular location is the cytoplasm. The enzyme catalyses (2S,6S)-2,6-diaminopimelate = meso-2,6-diaminopimelate. Its pathway is amino-acid biosynthesis; L-lysine biosynthesis via DAP pathway; DL-2,6-diaminopimelate from LL-2,6-diaminopimelate: step 1/1. In terms of biological role, catalyzes the stereoinversion of LL-2,6-diaminopimelate (L,L-DAP) to meso-diaminopimelate (meso-DAP), a precursor of L-lysine and an essential component of the bacterial peptidoglycan. The polypeptide is Diaminopimelate epimerase (Desulforapulum autotrophicum (strain ATCC 43914 / DSM 3382 / VKM B-1955 / HRM2) (Desulfobacterium autotrophicum)).